The following is a 262-amino-acid chain: MDINASRALANVYDLPDDFFPKIDDLVRDAKDALEPYWKSDSIKKHVLIATHFVDLIEDFWQTTQGMHEIAESLRAVIPPTTTPVPPGYLIQHEEAEEIPLGDLFKHQEERIVSFQPDYPITARIHAHLKAYAKINEESLDRARRLLWWHYNCLLWGEAQVTNYISRLRTWLSTPEKYRGRDAPTIEAITRPIQVAQGGRKTTTGTRKPRGLEPRRRKVKTTVVYGRRRSKSRERRAPTPQRAGSPLPRSSSSHHRSPSPRK.

Positions 183–262 are disordered; that stretch reads APTIEAITRP…SHHRSPSPRK (80 aa). The Bipartite nuclear localization signal signature appears at 215-233; it reads RRRKVKTTVVYGRRRSKSR. Over residues 215 to 234 the composition is skewed to basic residues; it reads RRRKVKTTVVYGRRRSKSRE. 2 positions are modified to phosphoserine; by host: serine 232 and serine 245. Basic residues predominate over residues 252-262; sequence SSHHRSPSPRK. Positions 254-260 are RNA binding; the sequence is HHRSPSP.

Belongs to the avihepadnavirus core antigen family. In terms of assembly, homodimerizes, then multimerizes.

Its subcellular location is the virion. The protein localises to the host cytoplasm. Self assembles to form an icosahedral capsid. Most capsid appear to be large particles with an icosahedral symmetry of T=4 and consist of 240 copies of capsid protein, though a fraction forms smaller T=3 particles consisting of 180 capsid proteins. Entering capsid are transported along microtubules to the nucleus. Phosphorylation of the capsid is thought to induce exposure of nuclear localization signal in the C-terminal portion of the capsid protein that allows binding to the nuclear pore complex via the importin (karyopherin-) alpha and beta. Capsids are imported in intact form through the nuclear pore into the nuclear basket, where it probably binds NUP153. Only capsids that contain the mature viral genome can release the viral DNA and capsid protein into the nucleoplasm. Immature capsids get stucked in the basket. Capsids encapsulate the pre-genomic RNA and the P protein. Pre-genomic RNA is reverse transcribed into DNA while the capsid is still in the cytoplasm. The capsid can then either be directed to the nucleus, providing more genome for transcription, or bud through the endoplasmic reticulum to provide new virions. The chain is Capsid protein (C) from Anas (ducks).